An 885-amino-acid polypeptide reads, in one-letter code: Probable alpha-glucosidase Os06g0675700 (885 aa).

The signal sequence occupies residues 1–33 (MMGSPPAPPARRLGALAVFLLALFLAAPWGVDC). Residues N195, N378, and N397 are each glycosylated (N-linked (GlcNAc...) asparagine). Active-site residues include D443 and E446. Residues N467 and N477 are each glycosylated (N-linked (GlcNAc...) asparagine). Residue D540 is the Proton donor of the active site. 2 N-linked (GlcNAc...) asparagine glycosylation sites follow: N576 and N844.

The protein belongs to the glycosyl hydrolase 31 family.

The catalysed reaction is Hydrolysis of terminal, non-reducing (1-&gt;4)-linked alpha-D-glucose residues with release of alpha-D-glucose.. The sequence is that of Probable alpha-glucosidase Os06g0675700 from Oryza sativa subsp. japonica (Rice).